The following is a 294-amino-acid chain: Transcription repressor OFP14 (294 aa).

The span at 49–60 (SFKHRRRSSKTR) shows a compositional bias: basic residues. Disordered stretches follow at residues 49 to 72 (SFKH…HQDS), 96 to 129 (DDQE…DDDD), and 141 to 185 (AVYD…SRST). 2 stretches are compositionally biased toward basic and acidic residues: residues 61–72 (FSKEEPVYHQDS) and 96–117 (DDQE…RESS). The span at 118–128 (SDDSDDDDDDD) shows a compositional bias: acidic residues. Over residues 164-185 (SSEGRPSMETTSTSSERQSRST) the composition is skewed to low complexity. Positions 195 to 259 (VLRYTDEPQE…LSAFVDLIIA (65 aa)) constitute an OVATE domain.

Interacts with KNAT2 and KNAT3. In terms of tissue distribution, expressed in roots, rosette and cauline leaves, shoots, stems, flower buds and siliques.

The protein resides in the nucleus. In terms of biological role, transcriptional repressor that may regulate multiple aspects of plant growth and development through the regulation of BEL1-LIKE (BLH) and KNOX TALE (KNAT) homeodomain transcription factors. The protein is Transcription repressor OFP14 (OFP14) of Arabidopsis thaliana (Mouse-ear cress).